The following is a 92-amino-acid chain: Large ribosomal subunit protein bL27 (92 aa).

Positions 1–9 are excised as a propeptide; the sequence is MLVMNLQYF.

The protein belongs to the bacterial ribosomal protein bL27 family. In terms of processing, the N-terminus is cleaved by ribosomal processing cysteine protease Prp.

The chain is Large ribosomal subunit protein bL27 from Heliobacterium modesticaldum (strain ATCC 51547 / Ice1).